The primary structure comprises 286 residues: MISKEYISLLSALLTKGYSKVAVYSYSYSYSNYSSVSYITFNFPTGIMMVAKEGGIVQATSLASIQSLIESGGELSITYLATFTTSFSANEIDMYAVIGTTMLYKIASVTGSFTSSSDDNLSVEWTIDVVVGNIFNVSSGSSGVTAYSLPTGQCTSLSGQLIMYPYLVHLLIAYTLIPSTSFTVQSKYPNLPLATMLATVPTPTSPTQLQGITSFMYACGNTPVLCYPVYNDVGTAIITSSVNCTSLTIVALYQIGSTYLAYMQSPANVTLNVGNAYSYEFGVVIS.

Residues 1–19 (MISKEYISLLSALLTKGYS) form the signal peptide.

This is an uncharacterized protein from Acidianus filamentous virus 2 (isolate Italy/Pozzuoli) (AFV-2).